Reading from the N-terminus, the 616-residue chain is MEDTQDLNEQSVKKTCPEADVSEPQNSRSMEMQDLASPHALVGGSDTPGSSKLDKSGLSSTSVTTNGTGVSLLAVKTEPLHSSESTTTTGDGALDTFTGSVITSSGYSPRSAQQYSPQLYPSKPYPHILSTPAAQTMSAYAGQTQYSGMQQPAVYTAYSQTGQPYSLPAYDLGVMLPAIKTESGLSQTQSPLQSGCLSYSPGFSTPQPGQTPYSYQMPGSSFAPSSTIYANNSVSNSTNFSSSQQDYPSYTAFGQNQYAQYYSASTYGAYMTSNNTADGTSSSTSTYQLQESLQGLTSQPGEFDTVQSPSTPIKDLDDRTCRSSGSKSRGRGRKNNPSPPPDSDLERVFVWDLDETIIVFHSLLTGSYAQKYGKDPPMAVTLGLRMEEMIFNLADTHLFFNDLEECDQVHIDDVSSDDNGQDLSTYSFATDGFHAAASSANLCLPTGVRGGVDWMRKLAFRYRRVKELYNTYKNNVGGLLGPAKRDAWLQLRAEIEGLTDSWLTNALKSLSIISTRSNCVNVLVTTTQLIPALAKVLLYSLGGAFPIENIYSATKIGKESCFERIVSRFGTNITYVVIGDGRDEEHAANQHNMPFWRISSHSDLLALHQALELEYL.

Position 1 is an N-acetylmethionine (methionine 1). Disordered stretches follow at residues 1–66 (MEDT…VTTN), 186–211 (SQTQ…PGQT), and 277–345 (ADGT…DSDL). Glycyl lysine isopeptide (Lys-Gly) (interchain with G-Cter in SUMO2) cross-links involve residues lysine 14 and lysine 52. Positions 56-66 (SGLSSTSVTTN) are enriched in low complexity. Positions 277 to 311 (ADGTSSSTSTYQLQESLQGLTSQPGEFDTVQSPST) are enriched in polar residues. Phosphoserine is present on serine 338. The active-site Nucleophile is the aspartate 352. Residues aspartate 352, aspartate 354, and aspartate 580 each contribute to the Mg(2+) site. Aspartate 354 acts as the Proton donor in catalysis.

It belongs to the HAD-like hydrolase superfamily. EYA family. In terms of assembly, interacts with SIX3; translocates EYA4 from the cytoplasm to the nucleus and promotes activation of their target genes. It depends on Mg(2+) as a cofactor. As to expression, in the embryo, expressed mainly in the craniofacial mesenchyme, dermamyotome and limb.

The protein resides in the cytoplasm. It localises to the nucleus. It catalyses the reaction O-phospho-L-tyrosyl-[protein] + H2O = L-tyrosyl-[protein] + phosphate. In terms of biological role, tyrosine phosphatase that specifically dephosphorylates 'Tyr-142' of histone H2AX (H2AXY142ph). 'Tyr-142' phosphorylation of histone H2AX plays a central role in DNA repair and acts as a mark that distinguishes between apoptotic and repair responses to genotoxic stress. Promotes efficient DNA repair by dephosphorylating H2AX, promoting the recruitment of DNA repair complexes containing MDC1. Its function as histone phosphatase probably explains its role in transcription regulation during organogenesis. May be involved in development of the eye. This Mus musculus (Mouse) protein is Protein phosphatase EYA4 (Eya4).